The sequence spans 503 residues: GMP synthase [glutamine-hydrolyzing] (503 aa).

The region spanning 3–189 (PVLVVDFGSQ…AFLSSFAAPN (187 aa)) is the Glutamine amidotransferase type-1 domain. Catalysis depends on C80, which acts as the Nucleophile. Residues H165 and E167 contribute to the active site. A GMPS ATP-PPase domain is found at 190 to 380 (WDPEQTICGT…LGIPKHIVHR (191 aa)). 217 to 223 (SGGVDSV) contacts ATP.

Homodimer.

The enzyme catalyses XMP + L-glutamine + ATP + H2O = GMP + L-glutamate + AMP + diphosphate + 2 H(+). It functions in the pathway purine metabolism; GMP biosynthesis; GMP from XMP (L-Gln route): step 1/1. In terms of biological role, catalyzes the synthesis of GMP from XMP. This is GMP synthase [glutamine-hydrolyzing] from Tropheryma whipplei (strain Twist) (Whipple's bacillus).